The chain runs to 707 residues: tRNA 5-methylaminomethyl-2-thiouridine biosynthesis bifunctional protein MnmC (707 aa).

Positions 1 to 264 are tRNA (mnm(5)s(2)U34)-methyltransferase; the sequence is MTKKLEHEYI…KREMLFGTFE (264 aa). Residues 312–707 are FAD-dependent cmnm(5)s(2)U34 oxidoreductase; that stretch reads IGGGLAGAHA…LFRDLTRNRI (396 aa).

This sequence in the N-terminal section; belongs to the methyltransferase superfamily. tRNA (mnm(5)s(2)U34)-methyltransferase family. It in the C-terminal section; belongs to the DAO family. FAD is required as a cofactor.

It localises to the cytoplasm. The enzyme catalyses 5-aminomethyl-2-thiouridine(34) in tRNA + S-adenosyl-L-methionine = 5-methylaminomethyl-2-thiouridine(34) in tRNA + S-adenosyl-L-homocysteine + H(+). Its function is as follows. Catalyzes the last two steps in the biosynthesis of 5-methylaminomethyl-2-thiouridine (mnm(5)s(2)U) at the wobble position (U34) in tRNA. Catalyzes the FAD-dependent demodification of cmnm(5)s(2)U34 to nm(5)s(2)U34, followed by the transfer of a methyl group from S-adenosyl-L-methionine to nm(5)s(2)U34, to form mnm(5)s(2)U34. The chain is tRNA 5-methylaminomethyl-2-thiouridine biosynthesis bifunctional protein MnmC from Saccharophagus degradans (strain 2-40 / ATCC 43961 / DSM 17024).